We begin with the raw amino-acid sequence, 317 residues long: Lipoyl synthase (317 aa).

7 residues coordinate [4Fe-4S] cluster: cysteine 55, cysteine 60, cysteine 66, cysteine 81, cysteine 85, cysteine 88, and serine 292. Residues 67 to 281 (WEDREATFLI…ERYATEIGFA (215 aa)) enclose the Radical SAM core domain.

It belongs to the radical SAM superfamily. Lipoyl synthase family. It depends on [4Fe-4S] cluster as a cofactor.

The protein resides in the cytoplasm. The catalysed reaction is [[Fe-S] cluster scaffold protein carrying a second [4Fe-4S](2+) cluster] + N(6)-octanoyl-L-lysyl-[protein] + 2 oxidized [2Fe-2S]-[ferredoxin] + 2 S-adenosyl-L-methionine + 4 H(+) = [[Fe-S] cluster scaffold protein] + N(6)-[(R)-dihydrolipoyl]-L-lysyl-[protein] + 4 Fe(3+) + 2 hydrogen sulfide + 2 5'-deoxyadenosine + 2 L-methionine + 2 reduced [2Fe-2S]-[ferredoxin]. It participates in protein modification; protein lipoylation via endogenous pathway; protein N(6)-(lipoyl)lysine from octanoyl-[acyl-carrier-protein]: step 2/2. Catalyzes the radical-mediated insertion of two sulfur atoms into the C-6 and C-8 positions of the octanoyl moiety bound to the lipoyl domains of lipoate-dependent enzymes, thereby converting the octanoylated domains into lipoylated derivatives. The chain is Lipoyl synthase from Mycolicibacterium gilvum (strain PYR-GCK) (Mycobacterium gilvum (strain PYR-GCK)).